The primary structure comprises 228 residues: LexA repressor (228 aa).

Positions 26–46 form a DNA-binding region, H-T-H motif; the sequence is FDEMKDALDLRSKSGIHRLIT. Residues serine 149 and lysine 187 each act as for autocatalytic cleavage activity in the active site.

It belongs to the peptidase S24 family. Homodimer.

It carries out the reaction Hydrolysis of Ala-|-Gly bond in repressor LexA.. Functionally, represses a number of genes involved in the response to DNA damage (SOS response), including recA and lexA. Has been shown to bind to the direct repeat sequence 5'-GTT-N(7)-GTTC-3'. In the presence of single-stranded DNA, RecA interacts with LexA causing an autocatalytic cleavage which disrupts the DNA-binding part of LexA, leading to derepression of the SOS regulon and eventually DNA repair. The chain is LexA repressor from Cereibacter sphaeroides (strain ATCC 17023 / DSM 158 / JCM 6121 / CCUG 31486 / LMG 2827 / NBRC 12203 / NCIMB 8253 / ATH 2.4.1.) (Rhodobacter sphaeroides).